Consider the following 309-residue polypeptide: L-arabinose 1-dehydrogenase (NAD(P)(+)) (309 aa).

Residues Ile15 and 37-38 (SR) each bind NADP(+). Lys91 acts as the Proton donor in catalysis. Residue Asp169 coordinates NADP(+).

It belongs to the Gfo/Idh/MocA family. As to quaternary structure, monomer.

It carries out the reaction alpha-L-arabinopyanose + NAD(+) = L-arabinono-1,4-lactone + NADH + H(+). The catalysed reaction is alpha-L-arabinopyanose + NADP(+) = L-arabinono-1,4-lactone + NADPH + H(+). It catalyses the reaction D-galactose + NAD(+) = D-galactono-1,4-lactone + NADH + H(+). The enzyme catalyses D-galactose + NADP(+) = D-galactono-1,5-lactone + NADPH + H(+). It participates in carbohydrate degradation; L-arabinose degradation via L-arabinono-1,4-lactone pathway. In terms of biological role, catalyzes the NAD(P)(+)-dependent conversion of L-arabinose to L-arabino-gamma-lactone. Is involved in a degradation pathway of L-arabinose that allows A.brasilense to grow on L-arabinose as a sole carbon source. Prefers NADP(+) to NAD(+) as electron acceptor. Displays high catalytic efficiency for both L-arabinose and D-galactose in vitro. However, the enzyme appears to be involved in the metabolism of L-arabinose but not D-galactose in vivo. To a lesser extent, is also active on D-talose and D-xylose as substrates in vitro, but not with D-arabinose, D-glucose, D-ribose, L-xylose, L-mannose, L-lyxose, and D-fructose. The sequence is that of L-arabinose 1-dehydrogenase (NAD(P)(+)) (araA) from Azospirillum brasilense.